The chain runs to 90 residues: Small ribosomal subunit protein bS16 (90 aa).

The protein belongs to the bacterial ribosomal protein bS16 family.

The sequence is that of Small ribosomal subunit protein bS16 from Lactobacillus delbrueckii subsp. bulgaricus (strain ATCC 11842 / DSM 20081 / BCRC 10696 / JCM 1002 / NBRC 13953 / NCIMB 11778 / NCTC 12712 / WDCM 00102 / Lb 14).